The sequence spans 858 residues: MDLKAQSIPFAWLDRDKVQRLTNFLSNLENLENVDLREHPYVTNSCVVREGEDVDELKTLYNTFILWLMYHYVLSKRKPDYNAIWQDITKLQNVVNEYLKSKGLNKGNFENMFTNKEKFESQFSDIHRALLRLGNSIRWGSNVPIDTPYVNLTAEDSSEIENNLQDAEKNMLWYTVYNINDPWDENGYLVTSINKLVYLGKLFVTLNQSWSKLEKVAMSQIVTTQNHLSGHLRKNENFNAVYSQRVLQTPLTGQRVESFLKIITSDYEIIKSSLESYSASKAFSVPENGPHSLMDFASLDGRMPSDLSLPSISIDTKRPSADLARLKISQPKSLDAPLKTQRRHKFPESDSVDNAGGKILIKKETLGGRDVRATTPVSSVSLMSGVEPLSSLTSTNLDLRDKSHGNYRIGPSGILDFGVKLPAEAQSNTGDVDLLQDKTSIRSPSSGITDVVNGLANLNLRQNKSDVSRPWSKNTAANADVFDPVHRLVSEQTGTPFVLNNSDVAGSEAKLTTHSTETGVSPHNVSLIKDLRDKDGFRKQKKLDLLGSWTKEKNDKAIVHSREVTGDSGDATETVTARDSPVLRKTKHANDIFAGLNKKYARDVSRGGKGNSRDLYSGGNAEKKETSGKFNVDKEMTQNEQEPLPNLMEAARNAGEEQYVQAGLGQRVNKILAEFTNLISLGEKGIQDILHNQSGTELKLPTENKLGRESEEANVERILEVSDPQNLFKNFKLQNDLDSVQSPFRLPNADLSRDLDSVSFKDALDVKLPGNGEREIDLALQKVKAGERETSDFKVGQDETLIPTQLMKVETPEEKDDVIEKMVLRIRQDGETDEETVPGPGVAESLGIAAKDKSVIAS.

Residues 603 to 629 form a disordered region; sequence DVSRGGKGNSRDLYSGGNAEKKETSGK.

Belongs to the herpesviridae large structural phosphoprotein family. As to quaternary structure, homotetramer. Interacts with the major capsid protein. 180 tegument protein pU11 tetramers bind to the virion capsid. Phosphorylated at multiple sites.

The protein localises to the virion tegument. The sequence is that of Large structural phosphoprotein (U11) from Homo sapiens (Human).